A 215-amino-acid polypeptide reads, in one-letter code: Pyridoxine/pyridoxamine 5'-phosphate oxidase (215 aa).

Residues 9–12 and Lys-69 contribute to the substrate site; that span reads RREY. Residues 64-69, 79-80, Lys-86, and Gln-108 each bind FMN; these read RILLLK and FT. Substrate-binding residues include Tyr-126, Arg-130, and Ser-134. FMN contacts are provided by residues 143–144 and Trp-188; that span reads QS. A substrate-binding site is contributed by 194–196; it reads RLH. Position 198 (Arg-198) interacts with FMN.

The protein belongs to the pyridoxamine 5'-phosphate oxidase family. Homodimer. It depends on FMN as a cofactor.

The enzyme catalyses pyridoxamine 5'-phosphate + O2 + H2O = pyridoxal 5'-phosphate + H2O2 + NH4(+). It catalyses the reaction pyridoxine 5'-phosphate + O2 = pyridoxal 5'-phosphate + H2O2. It functions in the pathway cofactor metabolism; pyridoxal 5'-phosphate salvage; pyridoxal 5'-phosphate from pyridoxamine 5'-phosphate: step 1/1. The protein operates within cofactor metabolism; pyridoxal 5'-phosphate salvage; pyridoxal 5'-phosphate from pyridoxine 5'-phosphate: step 1/1. Catalyzes the oxidation of either pyridoxine 5'-phosphate (PNP) or pyridoxamine 5'-phosphate (PMP) into pyridoxal 5'-phosphate (PLP). This chain is Pyridoxine/pyridoxamine 5'-phosphate oxidase, found in Pseudomonas paraeruginosa (strain DSM 24068 / PA7) (Pseudomonas aeruginosa (strain PA7)).